Here is a 302-residue protein sequence, read N- to C-terminus: Glycine--tRNA ligase alpha subunit (302 aa).

It belongs to the class-II aminoacyl-tRNA synthetase family. As to quaternary structure, tetramer of two alpha and two beta subunits.

It localises to the cytoplasm. It catalyses the reaction tRNA(Gly) + glycine + ATP = glycyl-tRNA(Gly) + AMP + diphosphate. The chain is Glycine--tRNA ligase alpha subunit from Enterococcus faecalis (strain ATCC 700802 / V583).